The primary structure comprises 415 residues: 3-isopropylmalate dehydratase large subunit (415 aa).

3 residues coordinate [4Fe-4S] cluster: C297, C355, and C358.

The protein belongs to the aconitase/IPM isomerase family. LeuC type 2 subfamily. Heterodimer of LeuC and LeuD. [4Fe-4S] cluster is required as a cofactor.

The catalysed reaction is (2R,3S)-3-isopropylmalate = (2S)-2-isopropylmalate. The protein operates within amino-acid biosynthesis; L-leucine biosynthesis; L-leucine from 3-methyl-2-oxobutanoate: step 2/4. Functionally, catalyzes the isomerization between 2-isopropylmalate and 3-isopropylmalate, via the formation of 2-isopropylmaleate. The protein is 3-isopropylmalate dehydratase large subunit of Metallosphaera sedula (strain ATCC 51363 / DSM 5348 / JCM 9185 / NBRC 15509 / TH2).